Reading from the N-terminus, the 142-residue chain is Lysozyme X (142 aa).

The N-terminal stretch at M1–G19 is a signal peptide. The C-type lysozyme domain occupies R20 to V142. 4 disulfide bridges follow: C25–C140, C46–C130, C81–C97, and C93–C111. Residues E51 and D69 contribute to the active site.

Belongs to the glycosyl hydrolase 22 family. In terms of tissue distribution, found in the midgut.

It carries out the reaction Hydrolysis of (1-&gt;4)-beta-linkages between N-acetylmuramic acid and N-acetyl-D-glucosamine residues in a peptidoglycan and between N-acetyl-D-glucosamine residues in chitodextrins.. Unlikely to play an active role in the humoral immune defense. May have a function in the digestion of bacteria in the food. May be involved in the clearance of bacteria from the larval gut before metamorphosis. This Drosophila melanogaster (Fruit fly) protein is Lysozyme X (LysX).